Reading from the N-terminus, the 505-residue chain is ADP-ribosylarginine hydrolase CG2909 (505 aa).

Residues R198, G336, G338, G340, V341, W342, W377, D432, N439, E440, G450, and D451 each coordinate ADP-D-ribose.

The enzyme catalyses N(omega)-(ADP-D-ribosyl)-L-arginyl-[protein] + H2O = ADP-D-ribose + L-arginyl-[protein]. It catalyses the reaction N(omega)-(ADP-D-ribosyl)-L-arginine + H2O = ADP-D-ribose + L-arginine. In terms of biological role, protein ADP-ribosyl hydrolase that specifically removes mono-ADP-ribosyl modifications from protein arginine residues. This Drosophila melanogaster (Fruit fly) protein is ADP-ribosylarginine hydrolase CG2909.